Consider the following 603-residue polypeptide: MTEAPVSRIRNFSIIAHIDHGKSTLADRLLQTTGTVAARDMKEQFLDNMDLERERGITIKLQAARMNYRGEDGEEYVLNLIDTPGHVDFSYEVSRSLAACEGALLVVDASQGVEAQTLANVYLALEHNLEIIPVLNKIDLPGAEPERVKQEIEEIIGLDCSGAVMASAKEGIGIAEILESIVHLVPPPQDTVSEPLRALIFDSYYDPYRGVVVYFRVMDGTVKQGDKIRLMASGKEYQIDELGVLSPAQVQVKELHAGEVGYLAAAIKAVTDARVGDTITLATAPAKTPLPGYEEAKPMVFCGMFPTDADQFEDLREALEKLRLNDAALQYEPETSSAMGFGFRCGFLGLLHMEIVQERLEREYNLDLIITAPSVVYRVTPLKGEVFMIDNPSTLPDPQHREKIEEPYVQVEMITPETYVGTLMELAQTRRGVFKDMKYLTPERTTLIYELPLAEIVTDFFDQMKSRSRGYASMEYQLIGYRENPLVKLDILINSDPVDSLAAIVHRDKAYGVGRALVSKLRELIPRHQFKIPIQAAIGSKVIASESIPALRKDVLAKCYGGDITRKKKLLEKQKAGKKRMKAVGSVDVPQEAFMAVLRLKDE.

The 183-residue stretch at 7-189 (SRIRNFSIIA…SIVHLVPPPQ (183 aa)) folds into the tr-type G domain. GTP is bound by residues 19 to 24 (DHGKST) and 136 to 139 (NKID).

Belongs to the TRAFAC class translation factor GTPase superfamily. Classic translation factor GTPase family. LepA subfamily.

Its subcellular location is the cell inner membrane. The catalysed reaction is GTP + H2O = GDP + phosphate + H(+). In terms of biological role, required for accurate and efficient protein synthesis under certain stress conditions. May act as a fidelity factor of the translation reaction, by catalyzing a one-codon backward translocation of tRNAs on improperly translocated ribosomes. Back-translocation proceeds from a post-translocation (POST) complex to a pre-translocation (PRE) complex, thus giving elongation factor G a second chance to translocate the tRNAs correctly. Binds to ribosomes in a GTP-dependent manner. This Cyanothece sp. (strain PCC 7425 / ATCC 29141) protein is Elongation factor 4.